The sequence spans 94 residues: Pyrimidine/purine nucleoside phosphorylase (94 aa).

It belongs to the nucleoside phosphorylase PpnP family.

It carries out the reaction a purine D-ribonucleoside + phosphate = a purine nucleobase + alpha-D-ribose 1-phosphate. The catalysed reaction is adenosine + phosphate = alpha-D-ribose 1-phosphate + adenine. The enzyme catalyses cytidine + phosphate = cytosine + alpha-D-ribose 1-phosphate. It catalyses the reaction guanosine + phosphate = alpha-D-ribose 1-phosphate + guanine. It carries out the reaction inosine + phosphate = alpha-D-ribose 1-phosphate + hypoxanthine. The catalysed reaction is thymidine + phosphate = 2-deoxy-alpha-D-ribose 1-phosphate + thymine. The enzyme catalyses uridine + phosphate = alpha-D-ribose 1-phosphate + uracil. It catalyses the reaction xanthosine + phosphate = alpha-D-ribose 1-phosphate + xanthine. Functionally, catalyzes the phosphorolysis of diverse nucleosides, yielding D-ribose 1-phosphate and the respective free bases. Can use uridine, adenosine, guanosine, cytidine, thymidine, inosine and xanthosine as substrates. Also catalyzes the reverse reactions. The sequence is that of Pyrimidine/purine nucleoside phosphorylase from Escherichia coli (strain ATCC 8739 / DSM 1576 / NBRC 3972 / NCIMB 8545 / WDCM 00012 / Crooks).